The chain runs to 165 residues: uncharacterized protein (165 aa).

Residues 1–38 (MFTVKEKNRQELEEELNDLEFQIYRMQENMKDLSKDAK) are a coiled coil.

This is an uncharacterized protein from Bacillus subtilis (strain 168).